The primary structure comprises 430 residues: Putative membrane fusion protein SilB (430 aa).

Positions 1–28 are cleaved as a signal peptide; it reads MASLKIKYAAIIISSLIAGGLISVTAWQ. The tract at residues 407–430 is disordered; that stretch reads RHPEKTENSMPAMSEQPVNMHSGH. A compositionally biased stretch (polar residues) spans 414–430; the sequence is NSMPAMSEQPVNMHSGH.

Belongs to the membrane fusion protein (MFP) (TC 8.A.1) family.

Functionally, component of the sil cation efflux system that confers resistance to silver. May be part of a three-component cation/proton antiporter. The protein is Putative membrane fusion protein SilB (silB) of Salmonella typhimurium.